The chain runs to 129 residues: MYHSFNIAVIIPCYNEQKAIAKVINDFKTNIPTASIYVFDNNSTDSTAQVAEDAGATVHSVPLKGKGNVVRRMFSDVDADIYLMVDGDDTYDASSAPEMINHLIKNQLDMVVGCRQENGDQNTYRKGHR.

It belongs to the glycosyltransferase 2 family.

It participates in bacterial outer membrane biogenesis; lipopolysaccharide biosynthesis. This is Protein RfbJ (rfbJ) from Shigella flexneri.